Here is a 296-residue protein sequence, read N- to C-terminus: Cutinase est1 (296 aa).

The N-terminal stretch at 1 to 35 (MSVTTPRREASLLSRAVAVAAAAAATVALAAPAQA) is a signal peptide. The tract at residues 36–57 (ANPYERGPNPTESMLEARSGPF) is disordered. Tyrosine 95 contacts poly(ethylene terephthalate). The active-site Nucleophile is the serine 165. Poly(ethylene terephthalate) is bound by residues methionine 166 and tryptophan 190. Catalysis depends on charge relay system residues aspartate 211 and histidine 243. Cysteines 276 and 294 form a disulfide.

It belongs to the AB hydrolase superfamily. As to quaternary structure, monomer.

It localises to the secreted. The protein localises to the periplasm. It carries out the reaction (ethylene terephthalate)(n) + H2O = (ethylene terephthalate)(n-1) + 4-[(2-hydroxyethoxy)carbonyl]benzoate + H(+). It catalyses the reaction a butanoate ester + H2O = an aliphatic alcohol + butanoate + H(+). The catalysed reaction is cutin + H2O = cutin monomers.. Functionally, catalyzes the hydrolysis of cutin, a polyester that forms the structure of plant cuticle. Shows esterase activity towards p-nitrophenol-linked aliphatic esters (pNP-aliphatic esters). Capable of degrading the plastic poly(ethylene terephthalate) (PET), the most abundant polyester plastic in the world. Can also depolymerize the synthetic polyester poly(epsilon-caprolactone) (PCL). The sequence is that of Cutinase est1 from Thermobifida alba (Thermomonospora alba).